The chain runs to 190 residues: Large ribosomal subunit protein bL25 (190 aa).

It belongs to the bacterial ribosomal protein bL25 family. CTC subfamily. In terms of assembly, part of the 50S ribosomal subunit; part of the 5S rRNA/L5/L18/L25 subcomplex. Contacts the 5S rRNA. Binds to the 5S rRNA independently of L5 and L18.

Functionally, this is one of the proteins that binds to the 5S RNA in the ribosome where it forms part of the central protuberance. This is Large ribosomal subunit protein bL25 from Neisseria gonorrhoeae (strain ATCC 700825 / FA 1090).